The chain runs to 205 residues: MRGYFVVLEGIDGSGKTTQAKLLAEWFEEQGWDVLLTKEPTDTEFGRLIRELVLKNSIIDGSRISYEAEALLFAADRAEHVKKVILPALEKGKVVICDRYLYSSLAYQWARGLSLEWLMQINSFAPRPDLAILLDLPVKESIRRTKARGNMSEFDKLLELQRKVRMNYLKLAEMFKEMRIVNAMASVEEVHEDIVALVKHELLGL.

10-17 (GIDGSGKT) is a binding site for ATP.

Belongs to the thymidylate kinase family.

The enzyme catalyses dTMP + ATP = dTDP + ADP. The polypeptide is Probable thymidylate kinase (tmk) (Pyrococcus abyssi (strain GE5 / Orsay)).